The sequence spans 1615 residues: ABC transporter A family member 4 (1615 aa).

The next 7 membrane-spanning stretches (helical) occupy residues 30-50, 233-253, 278-298, 308-328, 337-357, 365-385, and 405-425; these read ILLP…SMII, GVFI…NIVI, SIIS…ILSA, ITLI…AFIL, YAGL…IIIG, LKLL…YVWC, and YEII…LWYL. The 202-residue stretch at 182 to 383 folds into the ABC transmembrane type-2 domain; that stretch reads TQIQTGVDQA…PIAISVANYV (202 aa). The ABC transporter 1 domain maps to 492 to 727; the sequence is ISIRNLRKEF…FGVGYLLTIS (236 aa). 528 to 535 is a binding site for ATP; it reads GPNGSGKS. A run of 7 helical transmembrane segments spans residues 855 to 875, 1022 to 1042, 1075 to 1095, 1106 to 1126, 1135 to 1155, 1174 to 1194, and 1218 to 1238; these read IKSF…GLIL, FVAI…IAAS, IWDY…IIAV, YISG…LMSF, VGAI…ISFI, IIEY…ILAI, and LLPN…ILLI. Residues 1293-1528 form the ABC transporter 2 domain; the sequence is IIFNNLYKKF…FGSGYSIEVK (236 aa). Residue 1331 to 1338 coordinates ATP; sequence GLNGCGKS.

Belongs to the ABC transporter superfamily. ABCA family.

The protein localises to the membrane. The protein is ABC transporter A family member 4 (abcA4) of Dictyostelium discoideum (Social amoeba).